The sequence spans 819 residues: Lon protease (819 aa).

A disordered region spans residues 1-36 (MDSTTNSDSPILDPNPEDVEKLLDESEEESEDQSTE). Positions 43–240 (LFILPLNKRP…KALILLKKEL (198 aa)) constitute a Lon N-terminal domain. Position 393–400 (393–400 (GPPGVGKT)) interacts with ATP. The region spanning 635-817 (STPVGVATGL…DDVLKVAFPK (183 aa)) is the Lon proteolytic domain. Catalysis depends on residues serine 723 and lysine 766.

This sequence belongs to the peptidase S16 family. As to quaternary structure, homohexamer. Organized in a ring with a central cavity.

It localises to the cytoplasm. It catalyses the reaction Hydrolysis of proteins in presence of ATP.. ATP-dependent serine protease that mediates the selective degradation of mutant and abnormal proteins as well as certain short-lived regulatory proteins. Required for cellular homeostasis and for survival from DNA damage and developmental changes induced by stress. Degrades polypeptides processively to yield small peptide fragments that are 5 to 10 amino acids long. Binds to DNA in a double-stranded, site-specific manner. This chain is Lon protease, found in Chlamydia pneumoniae (Chlamydophila pneumoniae).